We begin with the raw amino-acid sequence, 445 residues long: UPF0210 protein SPP_0289 (445 aa).

It belongs to the UPF0210 family. As to quaternary structure, homodimer.

The sequence is that of UPF0210 protein SPP_0289 from Streptococcus pneumoniae (strain P1031).